The primary structure comprises 82 residues: Small ribosomal subunit protein uS17 (82 aa).

It belongs to the universal ribosomal protein uS17 family. As to quaternary structure, part of the 30S ribosomal subunit.

In terms of biological role, one of the primary rRNA binding proteins, it binds specifically to the 5'-end of 16S ribosomal RNA. This chain is Small ribosomal subunit protein uS17, found in Nitrobacter winogradskyi (strain ATCC 25391 / DSM 10237 / CIP 104748 / NCIMB 11846 / Nb-255).